The sequence spans 469 residues: 3-isopropylmalate dehydratase large subunit (469 aa).

Residues C350, C410, and C413 each contribute to the [4Fe-4S] cluster site.

It belongs to the aconitase/IPM isomerase family. LeuC type 1 subfamily. As to quaternary structure, heterodimer of LeuC and LeuD. It depends on [4Fe-4S] cluster as a cofactor.

It carries out the reaction (2R,3S)-3-isopropylmalate = (2S)-2-isopropylmalate. It participates in amino-acid biosynthesis; L-leucine biosynthesis; L-leucine from 3-methyl-2-oxobutanoate: step 2/4. Catalyzes the isomerization between 2-isopropylmalate and 3-isopropylmalate, via the formation of 2-isopropylmaleate. This Agrobacterium fabrum (strain C58 / ATCC 33970) (Agrobacterium tumefaciens (strain C58)) protein is 3-isopropylmalate dehydratase large subunit.